The chain runs to 507 residues: DNA ligase B (507 aa).

The segment at 1–172 (MLLHDVAITS…AAAAGLSGAA (172 aa)) is not required for adenylyltransferase activity, required for nick joining. Glu209 contributes to the ATP binding site. Residue Lys211 is the N6-AMP-lysine intermediate of the active site. ATP contacts are provided by Arg216, Arg231, Glu260, Phe300, Arg372, and Lys378.

Belongs to the ATP-dependent DNA ligase family. As to quaternary structure, monomer. It depends on Mg(2+) as a cofactor.

The catalysed reaction is ATP + (deoxyribonucleotide)n-3'-hydroxyl + 5'-phospho-(deoxyribonucleotide)m = (deoxyribonucleotide)n+m + AMP + diphosphate.. Functionally, DNA ligase that seals nicks in double-stranded DNA during DNA replication, DNA recombination and DNA repair. The polypeptide is DNA ligase B (ligB) (Mycobacterium tuberculosis (strain ATCC 25618 / H37Rv)).